Here is a 94-residue protein sequence, read N- to C-terminus: Protein TraQ (94 aa).

Transmembrane regions (helical) follow at residues 14–34 and 37–57; these read ITGM…RLVY and PWMA…FGAY.

In terms of assembly, interacts with pilin.

The protein resides in the cell inner membrane. Functionally, required for efficient expression of pilin. Functions as a transient chaperone for propilin, preventing it from being prematurely degraded, and also promotes propilin translocation, positioning it in the membrane for processing to mature pilin. The polypeptide is Protein TraQ (traQ) (Escherichia coli (strain K12)).